We begin with the raw amino-acid sequence, 69 residues long: Brevinin-1CG1 (69 aa).

An N-terminal signal peptide occupies residues 1–22 (MFTMKKSLLLLFFLGTINLSLC). A propeptide spans 23–43 (EQERNAEEERRDDDEMDVEVE) (removed in mature form). Cysteines 63 and 69 form a disulfide.

In terms of tissue distribution, expressed by the skin glands.

It is found in the secreted. Its function is as follows. Antimicrobial peptide. Active against Gram-positive bacteria R.rhodochrous X15 and B.licheniformis X39 and against Gram-negative bacterium E.coli ATCC 25922. Has antifungal activity against a slime mold isolate. Has weak hemolytic activity against human erythrocytes. This chain is Brevinin-1CG1, found in Amolops chunganensis (Chungan torrent frog).